A 442-amino-acid polypeptide reads, in one-letter code: Serine--tRNA ligase (442 aa).

Residue 249–251 (TSE) coordinates L-serine. Residue 280–282 (RSE) coordinates ATP. Glutamate 303 contacts L-serine. 367 to 370 (EISS) lines the ATP pocket. Serine 402 is a binding site for L-serine.

The protein belongs to the class-II aminoacyl-tRNA synthetase family. Type-1 seryl-tRNA synthetase subfamily. As to quaternary structure, homodimer. The tRNA molecule binds across the dimer.

It localises to the cytoplasm. It carries out the reaction tRNA(Ser) + L-serine + ATP = L-seryl-tRNA(Ser) + AMP + diphosphate + H(+). The enzyme catalyses tRNA(Sec) + L-serine + ATP = L-seryl-tRNA(Sec) + AMP + diphosphate + H(+). Its pathway is aminoacyl-tRNA biosynthesis; selenocysteinyl-tRNA(Sec) biosynthesis; L-seryl-tRNA(Sec) from L-serine and tRNA(Sec): step 1/1. Functionally, catalyzes the attachment of serine to tRNA(Ser). Is also able to aminoacylate tRNA(Sec) with serine, to form the misacylated tRNA L-seryl-tRNA(Sec), which will be further converted into selenocysteinyl-tRNA(Sec). The chain is Serine--tRNA ligase from Acidovorax ebreus (strain TPSY) (Diaphorobacter sp. (strain TPSY)).